Reading from the N-terminus, the 49-residue chain is uncharacterized protein (49 aa).

Residues 23 to 43 (LYVISFVLFIVLFFGMFFKLI) traverse the membrane as a helical segment.

The protein resides in the host membrane. This is an uncharacterized protein from Spiroplasma melliferum (SpV1).